Consider the following 770-residue polypeptide: Probable methyltransferase PMT25 (770 aa).

At 1–17 the chain is on the cytoplasmic side; it reads MAMGKYSRVDGKKSSSY. The chain crosses the membrane as a helical; Signal-anchor for type II membrane protein span at residues 18 to 38; it reads GLTITIVLLLSLCLVGTWMFM. Residues 39-770 lie on the Lumenal side of the membrane; the sequence is SSWSAPADSA…ETETIKSAIA (732 aa). Residues 44–238 form a disordered region; that stretch reads PADSAGYSST…SSISKDQSSY (195 aa). The segment covering 55–79 has biased composition (basic and acidic residues); sequence TAKDVSKNDLRKEEGDRDPKNFSDE. N75 and N107 each carry an N-linked (GlcNAc...) asparagine glycan. The segment covering 92–109 has biased composition (polar residues); sequence QVKTDSENSAEGNQVNES. 2 stretches are compositionally biased toward basic and acidic residues: residues 110–124 and 131–177; these read SGEK…KESD and DGEK…KAEE. 2 N-linked (GlcNAc...) asparagine glycosylation sites follow: N163 and N178. 2 stretches are compositionally biased toward polar residues: residues 205–220 and 227–238; these read ESST…LVES and QQSSISKDQSSY. 2 N-linked (GlcNAc...) asparagine glycosylation sites follow: N244 and N363.

This sequence belongs to the methyltransferase superfamily.

Its subcellular location is the golgi apparatus membrane. The polypeptide is Probable methyltransferase PMT25 (Arabidopsis thaliana (Mouse-ear cress)).